The primary structure comprises 387 residues: Exodeoxyribonuclease 7 large subunit (387 aa).

It belongs to the XseA family. As to quaternary structure, heterooligomer composed of large and small subunits.

Its subcellular location is the cytoplasm. The catalysed reaction is Exonucleolytic cleavage in either 5'- to 3'- or 3'- to 5'-direction to yield nucleoside 5'-phosphates.. Bidirectionally degrades single-stranded DNA into large acid-insoluble oligonucleotides, which are then degraded further into small acid-soluble oligonucleotides. The sequence is that of Exodeoxyribonuclease 7 large subunit from Campylobacter fetus subsp. fetus (strain 82-40).